The sequence spans 1978 residues: Sodium channel protein type 8 subunit alpha (1978 aa).

2 disordered regions span residues 1-20 and 28-62; these read MAAR…FTPE and RIAE…LEAG. Over 1–132 the chain is Cytoplasmic; that stretch reads MAARVLAPPG…RIAIKILIHS (132 aa). Positions 28 to 61 are enriched in basic and acidic residues; the sequence is RIAESKLKKPPKADGSHREDDEDSKPKPNSDLEA. One copy of the I repeat lies at 114-442; the sequence is ILSPFNLIRR…KAMLEQLKKQ (329 aa). Residues 133-151 form a helical membrane-spanning segment; it reads VFSMIIMCTILTNCVFMTF. The Extracellular segment spans residues 152-158; the sequence is SNPPEWS. A helical transmembrane segment spans residues 159 to 179; the sequence is KNVEYTFTGIYTFESLVKIIA. At 180-193 the chain is on the cytoplasmic side; the sequence is RGFCIDGFTFLRDP. A helical membrane pass occupies residues 194 to 211; it reads WNWLDFSVIMMAYVTEFV. Residues 212-217 are Extracellular-facing; sequence DLGNVS. The N-linked (GlcNAc...) asparagine glycan is linked to asparagine 215. The helical transmembrane segment at 218–234 threads the bilayer; that stretch reads ALRTFRVLRALKTISVI. Topologically, residues 235-253 are cytoplasmic; that stretch reads PGLKTIVGALIQSVKKLSD. A helical transmembrane segment spans residues 254-273; sequence VMILTVFCLSVFALIGLQLF. Residues 274 to 355 lie on the Extracellular side of the membrane; the sequence is MGNLRNKCVV…PNYGYTSFDT (82 aa). Cysteine 281 and cysteine 333 are joined by a disulfide. Asparagine 289, asparagine 295, asparagine 308, and asparagine 326 each carry an N-linked (GlcNAc...) asparagine glycan. Residues 356–380 constitute an intramembrane region (pore-forming); that stretch reads FSWAFLALFRLMTQDYWENLYQLTL. Position 373 (glutamate 373) interacts with Na(+). Residues 381 to 387 are Extracellular-facing; sequence RAAGKTY. The chain crosses the membrane as a helical span at residues 388–408; it reads MIFFVLVIFVGSFYLVNLILA. At 409 to 751 the chain is on the cytoplasmic side; it reads VVAMAYEEQN…EIVNLIVMDP (343 aa). Disordered stretches follow at residues 446 to 530 and 576 to 597; these read AQAA…KAFR and DPGS…SEGR. The segment covering 473 to 486 has biased composition (low complexity); sequence SPRSSSELSKLSSK. The segment covering 489–500 has biased composition (basic residues); that stretch reads KERRNRRKKRKQ. Basic and acidic residues-rich tracts occupy residues 501-530 and 586-597; these read KELS…KAFR and DEHSTVEESEGR. 2 positions are modified to phosphoserine: serine 518 and serine 520. Residues 733 to 1005 form an II repeat; it reads CHPYWIKLKE…QISVIRIKKG (273 aa). The helical transmembrane segment at 752–770 threads the bilayer; it reads FVDLAITICIVLNTLFMAM. The Extracellular portion of the chain corresponds to 771–781; it reads EHHPMTPQFEH. A helical membrane pass occupies residues 782-801; sequence VLAVGNLVFTGIFTAEMFLK. At 802 to 815 the chain is on the cytoplasmic side; it reads LIAMDPYYYFQEGW. A helical membrane pass occupies residues 816–835; the sequence is NIFDGFIVSLSLMELGLADV. Topologically, residues 836 to 837 are extracellular; that stretch reads EG. Residues 838 to 855 form a helical membrane-spanning segment; the sequence is LSVLRSFRLLRVFKLAKS. Over 856-871 the chain is Cytoplasmic; sequence WPTLNMLIKIIGNSVG. The helical transmembrane segment at 872 to 890 threads the bilayer; that stretch reads ALGNLTLVLAIIVFIFAVV. Topologically, residues 891 to 919 are extracellular; sequence GMQLFGKSYKECVCKISQECKLPRWHMND. Cysteines 904 and 910 form a disulfide. Positions 920–940 form an intramembrane region, pore-forming; it reads FFHSFLIVFRVLCGEWIETMW. Na(+)-binding residues include glutamate 934 and glutamate 937. Residues 941-953 lie on the Extracellular side of the membrane; sequence DCMEVAGQAMCLI. A disulfide bridge connects residues cysteine 942 and cysteine 951. Residues 954–974 traverse the membrane as a helical segment; sequence VFMMVMVIGNLVVLNLFLALL. The Cytoplasmic segment spans residues 975 to 1197; the sequence is LSSFSADNLA…TCFLIVEHNW (223 aa). Residues 1105 to 1146 form a disordered region; it reads NLNTEDVSSESDPEGSKDKLDDTSSSEGSTIDIKPEVEEVPV. The stretch at 1178–1493 is one III repeat; it reads LGKSWWILRK…KKYYNAMKKL (316 aa). A helical membrane pass occupies residues 1198–1215; that stretch reads FETFIIFMILLSSGALAF. The Extracellular portion of the chain corresponds to 1216 to 1228; that stretch reads EDIYIEQRKTIRT. Residues 1229 to 1247 traverse the membrane as a helical segment; it reads ILEYADKVFTYIFILEMLL. Residues 1248–1261 lie on the Cytoplasmic side of the membrane; the sequence is KWTAYGFVKFFTNA. Residues 1262–1280 traverse the membrane as a helical segment; it reads WCWLDFLIVAVSLVSLIAN. Residues 1281-1288 are Extracellular-facing; that stretch reads ALGYSELG. The chain crosses the membrane as a helical span at residues 1289-1307; it reads AIKSLRTLRALRPLRALSR. At 1308-1324 the chain is on the cytoplasmic side; that stretch reads FEGMRVVVNALVGAIPS. A helical transmembrane segment spans residues 1325-1344; sequence IMNVLLVCLIFWLIFSIMGV. Over 1345-1397 the chain is Extracellular; the sequence is NLFAGKYHYCFNETSEIRFEIDEVNNKTDCEKLMEGNNTEIRWKNVKINFDNV. Cysteine 1354 and cysteine 1374 are disulfide-bonded. N-linked (GlcNAc...) asparagine glycosylation is found at asparagine 1356, asparagine 1370, and asparagine 1381. An intramembrane region (pore-forming) is located at residues 1398-1419; sequence GAGYLALLQVATFKGWMDIMYA. Residues 1420–1436 lie on the Extracellular side of the membrane; the sequence is AVDSRKPDEQPDYEGNI. Residues 1437–1458 traverse the membrane as a helical segment; it reads YMYIYFVIFIIFGSFFTLNLFI. Topologically, residues 1459–1521 are cytoplasmic; sequence GVIIDNFNQQ…IVFDFVTQQA (63 aa). Phosphoserine; by PKC is present on serine 1495. The stretch at 1502-1799 is one IV repeat; sequence IPRPLNKIQG…WEKFDPDATQ (298 aa). A helical membrane pass occupies residues 1522–1539; the sequence is FDIVIMMLICLNMVTMMV. The Extracellular segment spans residues 1540–1550; the sequence is ETDTQSKQMEN. A helical membrane pass occupies residues 1551–1569; it reads ILYWINLVFVIFFTCECVL. The Cytoplasmic portion of the chain corresponds to 1570-1581; the sequence is KMFALRHYYFTI. The chain crosses the membrane as a helical span at residues 1582-1599; sequence GWNIFDFVVVILSIVGMF. At 1600 to 1612 the chain is on the extracellular side; that stretch reads LADIIEKYFVSPT. A helical membrane pass occupies residues 1613–1629; the sequence is LFRVIRLARIGRILRLI. At 1630-1648 the chain is on the cytoplasmic side; the sequence is KGAKGIRTLLFALMMSLPA. A helical transmembrane segment spans residues 1649–1666; it reads LFNIGLLLFLVMFIFSIF. Topologically, residues 1667–1688 are extracellular; that stretch reads GMSNFAYVKHEAGIDDMFNFET. The segment at residues 1689-1711 is an intramembrane region (pore-forming); it reads FGNSMICLFQITTSAGWDGLLLP. At 1712-1740 the chain is on the extracellular side; that stretch reads ILNRPPDCSLDKEHPGSGFKGDCGNPSVG. Cysteines 1719 and 1734 form a disulfide. The helical transmembrane segment at 1741–1763 threads the bilayer; sequence IFFFVSYIIISFLIVVNMYIAII. At 1764–1978 the chain is on the cytoplasmic side; the sequence is LENFSVATEE…RQKEVRESKC (215 aa). Residues 1893 to 1922 enclose the IQ domain; sequence EEVSAVVLQRAYRGHLARRGFICRKITSNK. Residues 1924–1978 form a disordered region; the sequence is ENGGTHREKKESTPSTASLPSYDSVTKPDKEKQQRAEEGRRERAKRQKEVRESKC. The span at 1936-1947 shows a compositional bias: polar residues; it reads TPSTASLPSYDS. Positions 1949–1978 are enriched in basic and acidic residues; sequence TKPDKEKQQRAEEGRRERAKRQKEVRESKC.

The protein belongs to the sodium channel (TC 1.A.1.10) family. Nav1.6/SCN8A subfamily. In terms of assembly, the voltage-sensitive sodium channel consists of an ion-conducting pore-forming alpha subunit regulated by one or more beta-1 (SCN1B), beta-2 (SCN2B), beta-3 (SCN3B) and/or beta-4 (SCN4B) subunits. Beta-1 (SCN1B) and beta-3 (SCN3B) are non-covalently associated with alpha, while beta-2 (SCN2B) and beta-4 (SCN4B) are covalently linked by disulfide bonds. Interacts with FGF13. Interacts with NEDD4 and NEDD4L. Interacts with FGF14, GBG3, GBB2 and SCN1B. Interacts with TMEM233. Interacts with the conotoxin GVIIJ. Interacts with the scorpion toxin BMK M1. Interacts with CALM1; the interaction modulates the inactivation rate of SCN8A. In terms of processing, may be ubiquitinated by NEDD4L; which would promote its endocytosis. Phosphorylation at Ser-1495 by PKC in a highly conserved cytoplasmic loop slows inactivation of the sodium channel and reduces peak sodium currents. As to expression, expressed in the hippocampus (at protein level). Expressed in brain, cerebellum and spinal cord. Expressed in non-neuronal tissues, such as monocytes/macrophages.

It localises to the cell membrane. The protein localises to the cell projection. Its subcellular location is the axon. The protein resides in the cytoplasmic vesicle. It is found in the podosome. The enzyme catalyses Na(+)(in) = Na(+)(out). Its function is as follows. Pore-forming subunit of a voltage-gated sodium channel complex assuming opened or closed conformations in response to the voltage difference across membranes and through which sodium ions selectively pass along their electrochemical gradient. Contributes to neuronal excitability by regulating action potential threshold and propagation. More specifically expressed in non-neuronal cells, could play a role in sodium release from intracellular compartments and participate in the control of podosomes formation and macrophages adhesion and movement. The polypeptide is Sodium channel protein type 8 subunit alpha (Mus musculus (Mouse)).